The sequence spans 175 residues: Regenerating islet-derived protein 3-alpha (175 aa).

An N-terminal signal peptide occupies residues Met-1–Gly-26. A propeptide spanning residues Glu-27 to Arg-37 is cleaved from the precursor. 3 disulfide bridges follow: Cys-40–Cys-51, Cys-68–Cys-171, and Cys-146–Cys-163. Positions Tyr-47–Lys-172 constitute a C-type lectin domain. Zn(2+) is bound by residues His-50 and His-107. The sufficient to activate EXTL3 stretch occupies residues Trp-103–Glu-118. The EPN signature appears at Glu-114 to Asn-116. Glu-121 and His-145 together coordinate Zn(2+).

In terms of assembly, forms a hexameric membrane-permeabilizing oligomeric pore on membrane phospholipids. The hexamer is formed by three dimers related by helical symmetry. Forms filaments, filamentation traps pore complexes and limits damage to host cells. Interacts with EXTL3. In terms of processing, proteolytic processing by trypsin removes an inhibitory N-terminal propeptide and is essential for peptidoglycan binding and antibacterial activity. In terms of tissue distribution, expressed by keratinocytes. Highly expressed in epidermal keratinocytes of psoriasis patients (at protein level). Constitutively expressed in intestine. Low expression is found in healthy pancreas. Overexpressed during the acute phase of pancreatitis and in some patients with chronic pancreatitis.

It localises to the secreted. Its activity is regulated as follows. Lipopolysaccharide inhibits pore-forming activity, explaining why is bactericidal for Gram-positive but not Gram-negative bacteria. Its function is as follows. Bactericidal C-type lectin which acts exclusively against Gram-positive bacteria and mediates bacterial killing by binding to surface-exposed carbohydrate moieties of peptidoglycan. Binds membrane phospholipids and kills bacteria by forming a hexameric membrane-permeabilizing oligomeric pore. Functionally, acts as a hormone in response to different stimuli like anti-inflammatory signals, such as IL17A, or gut microbiome. Secreted by different cell types to activate its receptor EXTL3 and induce cell specific signaling pathways. Induced by IL17A in keratinocytes, regulates keratinocyte proliferation and differentiation after skin injury via activation of EXTL3-PI3K-AKT signaling pathway. In parallel, inhibits skin inflammation through the inhibition of inflammatory cytokines such as IL6 and TNF. In pancreas, is able to permealize beta-cells membrane and stimulate their proliferation. In terms of biological role, has bacteriostatic activity. The chain is Regenerating islet-derived protein 3-alpha from Homo sapiens (Human).